A 203-amino-acid polypeptide reads, in one-letter code: LexA repressor (203 aa).

Positions 28 to 47 (IREIGDEFGITAKGAYDHLK) form a DNA-binding region, H-T-H motif. Residues S127 and K164 each act as for autocatalytic cleavage activity in the active site.

Belongs to the peptidase S24 family. As to quaternary structure, homodimer.

The enzyme catalyses Hydrolysis of Ala-|-Gly bond in repressor LexA.. Functionally, represses a number of genes involved in the response to DNA damage (SOS response), including recA and lexA. In the presence of single-stranded DNA, RecA interacts with LexA causing an autocatalytic cleavage which disrupts the DNA-binding part of LexA, leading to derepression of the SOS regulon and eventually DNA repair. The polypeptide is LexA repressor (Leptospira borgpetersenii serovar Hardjo-bovis (strain JB197)).